Reading from the N-terminus, the 268-residue chain is MTNSSSSKKQAQDQPETSEPTLKSLKTKMTKSDEKQKKLKDIEISVPIVYGNVAFWLGKKASEYQSHKWAVYVRGATNEDISVVVKKVVFQLHSSFNSPTRVIEEPPFEVSESGWGEFEIAMTLHFHSDVCDKPLSLYHHLKLYPEDESGPLTMKKPVVVESYDEIVFPDPSESFLARVQNHPALTFPRLPSGYNLPAPMQVEDTGKKKRGDTKDHSLGQWFMSFSEADELLQLAAARQQVQAHIAKLRRQISLLEGQNQTVKTGSDL.

The span at Met1–Pro20 shows a compositional bias: polar residues. The disordered stretch occupies residues Met1–Gln36. Positions Lys38 to His182 constitute a YEATS domain. A coiled-coil region spans residues Asp229–Lys263.

The protein belongs to the YAF9 family. As to quaternary structure, component of the TFIID complex. TFIID is composed of TATA binding protein (TBP) and a number of TBP-associated factors (TAFs) whose MWs range from 14-217 kDa. Interacts with TAF1, TAF4B and TAF12B. Component of the SWR1 chromatin-remodeling complex. Interacts with FLX, a component of the transcription activator complex FRI-C. Interacts with SWC4, and with EAF1A and EAF1B (via HSA domain). In terms of tissue distribution, expressed in roots, leaves, inflorescence and flowering tissues.

The protein localises to the cytoplasm. Its subcellular location is the nucleus. Negative regulator of flowering controlling the H4K5 acetylation levels in the FLC and FT chromatin. Positively regulates FLC expression. Component of the transcription factor IID (TFIID) complex that is essential for mediating regulation of RNA polymerase transcription. Component of the SWR1 complex which mediates the ATP-dependent exchange of histone H2A for the H2A variant HZT1 leading to transcriptional regulation of selected genes by chromatin remodeling. Component of a NuA4 histone acetyltransferase complex which is involved in transcriptional activation of selected genes principally by acetylation of nucleosomal histones H4 and H2A. This is Transcription initiation factor TFIID subunit 14b from Arabidopsis thaliana (Mouse-ear cress).